Here is a 276-residue protein sequence, read N- to C-terminus: tRNA (guanine-N(7)-)-methyltransferase (276 aa).

A disordered region spans residues 1–36 (MAAETRNVAGAEAPPPQKRYYRQRAHSNPMADHTLR). Residue A2 is modified to N-acetylalanine. Phosphoserine; by PKB/AKT1 and RPS6KA3 is present on S27. Residues G84, E107, I108, R109, N140, A141, and L160 each coordinate S-adenosyl-L-homocysteine. Residues G84 and E107 each coordinate S-adenosyl-L-methionine. S-adenosyl-L-methionine-binding residues include R109, N140, A141, and L160. Residue D163 is part of the active site. Residues 164-172 (PHFKRTKHK) form an alphaC helix region. S-adenosyl-L-homocysteine is bound by residues T238 and E240. Residues T238 and E240 each coordinate S-adenosyl-L-methionine. The segment at 238–246 (TEEGKKVLR) is alpha6 helix.

It belongs to the class I-like SAM-binding methyltransferase superfamily. TrmB family. Catalytic component of the METTL1-WDR4 complex, composed of METTL1 and WDR4. In terms of processing, phosphorylation at Ser-27 by PKB/AKT1 inactivates its methyltransferase activity via a steric interference mechanism in the active site that locally disrupts the catalytic center. Phosphorylation at Ser-27 does not affect the interaction with WDR4. In terms of tissue distribution, ubiquitous.

The protein resides in the nucleus. It catalyses the reaction guanosine(46) in tRNA + S-adenosyl-L-methionine = N(7)-methylguanosine(46) in tRNA + S-adenosyl-L-homocysteine. The enzyme catalyses a guanosine in mRNA + S-adenosyl-L-methionine = an N(7)-methylguanosine in mRNA + S-adenosyl-L-homocysteine. It carries out the reaction a guanosine in miRNA + S-adenosyl-L-methionine = an N(7)-methylguanosine in miRNA + S-adenosyl-L-homocysteine. It participates in tRNA modification; N(7)-methylguanine-tRNA biosynthesis. In terms of biological role, catalytic component of METTL1-WDR4 methyltransferase complex that mediates the formation of N(7)-methylguanine in a subset of RNA species, such as tRNAs, mRNAs and microRNAs (miRNAs). Catalyzes the formation of N(7)-methylguanine at position 46 (m7G46) in a large subset of tRNAs that contain the 5'-RAGGU-3' motif within the variable loop. M7G46 interacts with C13-G22 in the D-loop to stabilize tRNA tertiary structure and protect tRNAs from decay. Also acts as a methyltransferase for a subset of internal N(7)-methylguanine in mRNAs. Internal N(7)-methylguanine methylation of mRNAs in response to stress promotes their relocalization to stress granules, thereby suppressing their translation. Also methylates a specific subset of miRNAs, such as let-7. N(7)-methylguanine methylation of let-7 miRNA promotes let-7 miRNA processing by disrupting an inhibitory secondary structure within the primary miRNA transcript (pri-miRNA). Acts as a regulator of embryonic stem cell self-renewal and differentiation. This is tRNA (guanine-N(7)-)-methyltransferase from Homo sapiens (Human).